A 331-amino-acid polypeptide reads, in one-letter code: Terpene synthase 8 (331 aa).

Positions 97-102 (DDFYLE) match the DDxx(x)D/E motif motif. Positions 228 to 236 (NDIYSFNKE) match the NDxxSxxxD/E motif motif.

This sequence belongs to the terpene synthase family.

In terms of biological role, terpene synthase that converts its substrate farnesyl diphosphate (FPP) into several yet unidentified sesquiterpenes. The polypeptide is Terpene synthase 8 (Dictyostelium purpureum (Slime mold)).